The following is a 507-amino-acid chain: Steroid 17-alpha-hydroxylase/17,20 lyase (507 aa).

Cys-441 lines the heme pocket.

Belongs to the cytochrome P450 family. Requires heme as cofactor.

The protein localises to the endoplasmic reticulum membrane. Its subcellular location is the microsome membrane. The enzyme catalyses a C21-steroid + reduced [NADPH--hemoprotein reductase] + O2 = a 17alpha-hydroxy-C21-steroid + oxidized [NADPH--hemoprotein reductase] + H2O + H(+). It catalyses the reaction progesterone + reduced [NADPH--hemoprotein reductase] + O2 = 17alpha-hydroxyprogesterone + oxidized [NADPH--hemoprotein reductase] + H2O + H(+). The catalysed reaction is pregnenolone + reduced [NADPH--hemoprotein reductase] + O2 = 17alpha-hydroxypregnenolone + oxidized [NADPH--hemoprotein reductase] + H2O + H(+). It carries out the reaction 17alpha-hydroxyprogesterone + reduced [NADPH--hemoprotein reductase] + O2 = androst-4-ene-3,17-dione + acetate + oxidized [NADPH--hemoprotein reductase] + H2O + 2 H(+). The enzyme catalyses 17alpha-hydroxyprogesterone + reduced [NADPH--hemoprotein reductase] + O2 = 16alpha,17alpha-dihydroxyprogesterone + oxidized [NADPH--hemoprotein reductase] + H2O + H(+). It catalyses the reaction 16alpha,17alpha-dihydroxyprogesterone + reduced [NADPH--hemoprotein reductase] + O2 = 6beta,16alpha,17alpha-trihydroxyprogesterone + oxidized [NADPH--hemoprotein reductase] + H2O + H(+). The catalysed reaction is 17alpha-hydroxypregnenolone + reduced [NADPH--hemoprotein reductase] + O2 = 3beta-hydroxyandrost-5-en-17-one + acetate + oxidized [NADPH--hemoprotein reductase] + H2O + 2 H(+). It carries out the reaction 16alpha,17alpha-dihydroxypregnenolone + reduced [NADPH--hemoprotein reductase] + O2 = 3beta,16alpha-dihydroxy-androst-5-en-17-one + acetate + oxidized [NADPH--hemoprotein reductase] + H2O + 2 H(+). The enzyme catalyses 3beta-hydroxyandrost-5-en-17-one + reduced [NADPH--hemoprotein reductase] + O2 = 3beta,16alpha-dihydroxy-androst-5-en-17-one + oxidized [NADPH--hemoprotein reductase] + H2O + H(+). It catalyses the reaction androst-4-ene-3,17-dione + reduced [NADPH--hemoprotein reductase] + O2 = 16alpha-hydroxyandrost-4-ene-3,17-dione + oxidized [NADPH--hemoprotein reductase] + H2O + H(+). The protein operates within steroid hormone biosynthesis. It participates in steroid biosynthesis; glucocorticoid biosynthesis. Regulated predominantly by intracellular cAMP levels. The 17,20-lyase activity is stimulated by cytochrome b5, which acts as an allosteric effector increasing the Vmax of the lyase activity. A cytochrome P450 monooxygenase involved in corticoid and androgen biosynthesis. Catalyzes 17-alpha hydroxylation of C21 steroids, which is common for both pathways. A second oxidative step, required only for androgen synthesis, involves an acyl-carbon cleavage. The 17-alpha hydroxy intermediates, as part of adrenal glucocorticoids biosynthesis pathway, are precursors of cortisol. Hydroxylates steroid hormones, pregnenolone and progesterone to form 17-alpha hydroxy metabolites, followed by the cleavage of the C17-C20 bond to form C19 steroids, dehydroepiandrosterone (DHEA) and androstenedione. Has 16-alpha hydroxylase activity. Catalyzes 16-alpha hydroxylation of 17-alpha hydroxy pregnenolone, followed by the cleavage of the C17-C20 bond to form 16-alpha-hydroxy DHEA. Also 16-alpha hydroxylates androgens, relevant for estriol synthesis. Mechanistically, uses molecular oxygen inserting one oxygen atom into a substrate, and reducing the second into a water molecule, with two electrons provided by NADPH via cytochrome P450 reductase (CPR; NADPH-ferrihemoprotein reductase). In Rattus norvegicus (Rat), this protein is Steroid 17-alpha-hydroxylase/17,20 lyase (Cyp17a1).